We begin with the raw amino-acid sequence, 261 residues long: Ribosomal RNA small subunit methyltransferase J (261 aa).

S-adenosyl-L-methionine is bound by residues 111–112 (RD), 127–128 (ER), 163–164 (SS), and D181.

This sequence belongs to the methyltransferase superfamily. RsmJ family.

Its subcellular location is the cytoplasm. It carries out the reaction guanosine(1516) in 16S rRNA + S-adenosyl-L-methionine = N(2)-methylguanosine(1516) in 16S rRNA + S-adenosyl-L-homocysteine + H(+). Its function is as follows. Specifically methylates the guanosine in position 1516 of 16S rRNA. The polypeptide is Ribosomal RNA small subunit methyltransferase J (Shewanella sp. (strain ANA-3)).